The following is a 354-amino-acid chain: 3'-5' exonuclease (354 aa).

Positions 1-120 (MERFLTKMPI…PSPEKEKPEK (120 aa)) are disordered. 2 stretches are compositionally biased toward basic and acidic residues: residues 13-30 (KANE…ETPK) and 37-50 (KKDT…KENA). The span at 59–70 (TKGRPGRPAAKR) shows a compositional bias: basic residues. Residues 71–91 (KNLDTPDVKDEKIAMEEENPP) are compositionally biased toward basic and acidic residues. A phosphoserine mark is found at Ser104, Ser110, and Ser112. Residues 149 to 314 (WVEKQKDDVV…GQVIYRELER (166 aa)) enclose the 3'-5' exonuclease domain. Mg(2+)-binding residues include Asp163, Glu165, and Asp301.

Belongs to the WRNexo family.

The protein localises to the nucleus. Its function is as follows. Has exonuclease activity on both single-stranded and duplex templates bearing overhangs, but not blunt ended duplex DNA, and cleaves in a 3'-5' direction. Essential for the formation of DNA replication focal centers. Has an important role in maintaining genome stability. In Drosophila simulans (Fruit fly), this protein is 3'-5' exonuclease.